The primary structure comprises 119 residues: Glucitol operon activator protein (119 aa).

The H-T-H motif DNA-binding region spans Gln23–Arg29.

Functionally, positive regulator for glucitol operon expression. In Escherichia coli (strain K12), this protein is Glucitol operon activator protein (gutM).